Reading from the N-terminus, the 281-residue chain is uncharacterized protein (281 aa).

The next 4 helical transmembrane spans lie at 8-28 (ALPV…FIWS), 97-117 (LAVA…RGYG), 147-167 (PARI…GLAV), and 210-230 (IASV…IVPA).

To S.pombe bem46 and yeast YNL320w.

It is found in the cell membrane. This is an uncharacterized protein from Mycobacterium tuberculosis (strain CDC 1551 / Oshkosh).